A 192-amino-acid chain; its full sequence is Small ribosomal subunit protein uS5 (192 aa).

The S5 DRBM domain occupies 20 to 83 (FVDKLVHINR…EAAKRGLIRV (64 aa)). Positions 162 to 192 (SVAARRGLKVSALQARRRDADPADTSEAAVA) are disordered.

This sequence belongs to the universal ribosomal protein uS5 family. As to quaternary structure, part of the 30S ribosomal subunit. Contacts proteins S4 and S8.

Its function is as follows. With S4 and S12 plays an important role in translational accuracy. Functionally, located at the back of the 30S subunit body where it stabilizes the conformation of the head with respect to the body. The sequence is that of Small ribosomal subunit protein uS5 from Methylorubrum extorquens (strain CM4 / NCIMB 13688) (Methylobacterium extorquens).